We begin with the raw amino-acid sequence, 268 residues long: Secreted RxLR effector protein 6 (268 aa).

A signal peptide spans 1 to 19 (MRGAFYIAIALLVVRSRTA). The short motif at 48–63 (RYLRDGLAHSAANEER) is the RxLR-dEER element. Positions 90 to 123 (IGGHSHTPKSKRKVNLSPAKSQSGIRKKSTSINK) are disordered. The span at 107 to 123 (PAKSQSGIRKKSTSINK) shows a compositional bias: polar residues.

Belongs to the RxLR effector family.

It localises to the secreted. The protein localises to the host nucleus. It is found in the host cytoplasm. Functionally, secreted effector that completely suppresses the host cell death induced by cell death-inducing proteins. This Plasmopara viticola (Downy mildew of grapevine) protein is Secreted RxLR effector protein 6.